We begin with the raw amino-acid sequence, 318 residues long: Ribose-phosphate pyrophosphokinase 1 (318 aa).

ATP contacts are provided by residues D43–E45 and R102–Q103. Mg(2+) contacts are provided by H136 and D176. K199 is a catalytic residue. Residues R201, D225, and D229–T233 contribute to the D-ribose 5-phosphate site.

It belongs to the ribose-phosphate pyrophosphokinase family. Class I subfamily. As to quaternary structure, homohexamer. The cofactor is Mg(2+).

The protein localises to the cytoplasm. It carries out the reaction D-ribose 5-phosphate + ATP = 5-phospho-alpha-D-ribose 1-diphosphate + AMP + H(+). It functions in the pathway metabolic intermediate biosynthesis; 5-phospho-alpha-D-ribose 1-diphosphate biosynthesis; 5-phospho-alpha-D-ribose 1-diphosphate from D-ribose 5-phosphate (route I): step 1/1. Its function is as follows. Involved in the biosynthesis of the central metabolite phospho-alpha-D-ribosyl-1-pyrophosphate (PRPP) via the transfer of pyrophosphoryl group from ATP to 1-hydroxyl of ribose-5-phosphate (Rib-5-P). This is Ribose-phosphate pyrophosphokinase 1 from Listeria monocytogenes serotype 4b (strain F2365).